Consider the following 207-residue polypeptide: Large ribosomal subunit protein uL4 (207 aa).

The interval 49-77 (HAVKNRSAVRGGGKKPWRQKGTGRARQGS) is disordered. The span at 60 to 71 (GGKKPWRQKGTG) shows a compositional bias: basic residues.

The protein belongs to the universal ribosomal protein uL4 family. In terms of assembly, part of the 50S ribosomal subunit.

One of the primary rRNA binding proteins, this protein initially binds near the 5'-end of the 23S rRNA. It is important during the early stages of 50S assembly. It makes multiple contacts with different domains of the 23S rRNA in the assembled 50S subunit and ribosome. Its function is as follows. Forms part of the polypeptide exit tunnel. In Levilactobacillus brevis (strain ATCC 367 / BCRC 12310 / CIP 105137 / JCM 1170 / LMG 11437 / NCIMB 947 / NCTC 947) (Lactobacillus brevis), this protein is Large ribosomal subunit protein uL4.